We begin with the raw amino-acid sequence, 282 residues long: uncharacterized protein (282 aa).

6 consecutive transmembrane segments (helical) span residues 18–38, 40–60, 87–107, 119–139, 164–184, and 260–280; these read PIVL…WAGT, LLVV…VTIG, LWIV…TPVV, ALHF…GAMV, IPVD…PMLI, and VTLA…SLIL.

It belongs to the CbiQ family.

It localises to the cell membrane. This is an uncharacterized protein from Mycobacterium tuberculosis (strain CDC 1551 / Oshkosh).